Reading from the N-terminus, the 177-residue chain is ATP-dependent protease subunit HslV (177 aa).

Threonine 6 is an active-site residue. The Na(+) site is built by serine 162, cysteine 165, and threonine 168.

Belongs to the peptidase T1B family. HslV subfamily. As to quaternary structure, a double ring-shaped homohexamer of HslV is capped on each side by a ring-shaped HslU homohexamer. The assembly of the HslU/HslV complex is dependent on binding of ATP.

It localises to the cytoplasm. The enzyme catalyses ATP-dependent cleavage of peptide bonds with broad specificity.. Its activity is regulated as follows. Allosterically activated by HslU binding. Protease subunit of a proteasome-like degradation complex believed to be a general protein degrading machinery. The sequence is that of ATP-dependent protease subunit HslV from Desulforudis audaxviator (strain MP104C).